The sequence spans 252 residues: Probable transcriptional regulatory protein Lxx10750 (252 aa).

This sequence belongs to the TACO1 family.

Its subcellular location is the cytoplasm. This Leifsonia xyli subsp. xyli (strain CTCB07) protein is Probable transcriptional regulatory protein Lxx10750.